The primary structure comprises 333 residues: Fructose-1,6-bisphosphatase class 1 (333 aa).

Mg(2+) contacts are provided by E92, D113, L115, and D116. Substrate is bound by residues 116-119 (DGSS), N209, Y242, and K272. E278 contacts Mg(2+).

This sequence belongs to the FBPase class 1 family. Homotetramer. Requires Mg(2+) as cofactor.

It is found in the cytoplasm. It carries out the reaction beta-D-fructose 1,6-bisphosphate + H2O = beta-D-fructose 6-phosphate + phosphate. The protein operates within carbohydrate biosynthesis; Calvin cycle. The polypeptide is Fructose-1,6-bisphosphatase class 1 (Chlorobium phaeobacteroides (strain BS1)).